The primary structure comprises 548 residues: MVEILDYTKALEVLKEYPSGDGLHVDTLLDSDNHGALTYNDFLILPGSITFSAADVSLDTKVTRRFTIKAPLLSSPMDTVTEHNMAIHMALLGGLGVIHNNCPPDDQAEMVRKVKRYENGFILDPVVLSPSTTVAEAKELKTKWNFGGFPVTGKTHYLSSFGKLASSDSFSLLEKGTLHSKLLGIVTSRDIQFHKTPEDPVTAVMSTELVTAPAGTTLAEANEVLRSSKKGKLPIVDKDGLLVSLLSRSDLMKNIHYPLASKLPSKQLLCAAAISTHDADKVRLQKLVDAGLDIVVVDSSQGNSMYQIAMIKWIKSTFPDIDIIAGNIVTREQAAALIAAGADGLRIGMGSGSACITQEVMAVGRPQAASVRSVSAFAARFGVPTIADGGVQNLGHIVKGLALGASAVMMGSLLAGTTESPGEYYVSNEGQLVKAFRGMGSIAVMEDKGKSGGGKNAGASRYFSENDKVKVAQGVAGSVVDRGSITQYVPYLVAGIQHSLQDIGVQDLEALHNGVNNGQVRFEMRSASAQTEGNVHGLHSHEKKLYSS.

CBS domains follow at residues 121–201 (FILD…EDPV) and 205–261 (MSTE…PLAS). NAD(+)-binding positions include 298–300 (DSS) and 348–350 (GMG). Positions 350 and 352 each coordinate K(+). S353 contributes to the IMP binding site. C355 lines the K(+) pocket. The active-site Thioimidate intermediate is the C355. Residues 388–390 (DGG) and 411–412 (GS) contribute to the IMP site. The Proton acceptor role is filled by R461. IMP is bound at residue Q473. A disordered region spans residues 527–548 (ASAQTEGNVHGLHSHEKKLYSS). S528 serves as a coordination point for K(+). Residues 539–548 (HSHEKKLYSS) are compositionally biased toward basic and acidic residues.

It belongs to the IMPDH/GMPR family. Homotetramer. K(+) is required as a cofactor.

The protein resides in the cytoplasm. The enzyme catalyses IMP + NAD(+) + H2O = XMP + NADH + H(+). It functions in the pathway purine metabolism; XMP biosynthesis via de novo pathway; XMP from IMP: step 1/1. With respect to regulation, mycophenolic acid (MPA) is a non-competitive inhibitor that prevents formation of the closed enzyme conformation by binding to the same site as the amobile flap. In contrast, mizoribine monophosphate (MZP) is a competitive inhibitor that induces the closed conformation. MPA is a potent inhibitor of mammalian IMPDHs but a poor inhibitor of the bacterial enzymes. MZP is a more potent inhibitor of bacterial IMPDH. Catalyzes the conversion of inosine 5'-phosphate (IMP) to xanthosine 5'-phosphate (XMP), the first committed and rate-limiting step in the de novo synthesis of guanine nucleotides, and therefore plays an important role in the regulation of cell growth. Part of the gene cluster that mediates the biosynthesis of mycophenolic acid (MPA), the first isolated antibiotic natural product in the world. Does not play a role in the biosynthesis of MPA, but is involved in self resistance to MPA, since MPA acts as an inhibitor of IMP dehydrogenases. The protein is Inosine-5'-monophosphate dehydrogenase of Penicillium brevicompactum.